The sequence spans 411 residues: Immunity-related GTPase family M protein (411 aa).

Residues 1–21 (MKPSHKSCEAAPLLPKMPETS) form a disordered region. The IRG-type G domain maps to 77 to 253 (IPVSIFVTGD…PELRNTLQTD (177 aa)). GTP-binding positions include 86–93 (DSGNGMSS), 111–115 (TGVVR), and 193–195 (KLD). Residue Ser-204 is modified to Phosphoserine. 234 to 236 (SNL) contacts GTP. Lys-272 participates in a covalent cross-link: Glycyl lysine isopeptide (Lys-Gly) (interchain with G-Cter in ubiquitin). Positions 352–376 (KLRLMTCTTVNALFCLFKFLPCLCH) are alpha-K amphipathic helix.

This sequence belongs to the TRAFAC class dynamin-like GTPase superfamily. IRG family. Interacts with ULK1; promoting the coassembly of ULK1 and BECN1. Interacts with BECN1; enhancing BECN1-interacting partners and influencing the composition of the BECN1 complex. Interacts with ATG16L1. Interacts with NOD2; promoting Irgm 'Lys-63'-linked polyubiquitination, which is required for interactions with the core autophagy factors. Interacts with STX17; promoting STX17 recruitment to autophagosomes. Interacts with ATG8 proteins (GABARAP, GABARAPL1, GABARAPL2, MAP1LC3A, MAP1LC3B and MAP1LC3C); promoting STX17 recruitment to autophagosomes. Interacts with TFEB; promoting association between TFEB and PPP3CB and TFEB dephosphorylation. Interacts with PPP3CB; promoting association between TFEB and PPP3CB and TFEB dephosphorylation. Interacts with NLRP3; preventing NLRP3 inflammasome assembly and promoting SQSTM1/p62-dependent autophagic degradation of NLRP3. Interacts with CGAS; promoting SQSTM1/p62-dependent autophagic degradation of CGAS. Interacts with RIGI/RIG-I; promoting SQSTM1/p62-dependent autophagic degradation of RIGI/RIG-I. Interacts with NOD1; promoting SQSTM1/p62-dependent autophagic degradation of RIGI/RIG-I. Interacts with NOD2; promoting SQSTM1/p62-dependent autophagic degradation of RIGI/RIG-I. Interacts with RIPK2; promoting SQSTM1/p62-dependent autophagic degradation of RIGI/RIG-I. Interacts with PIK3CA. Post-translationally, palmitoylated on C-terminal Cys residues. Palmitoylation, together with the alpha-K amphipathic helix, which binds phosphatidylinositol, mediate binding to membranes. Ubiquitinated via 'Lys-63'-linked polyubiquitination in a NOD2-dependent process. 'Lys-63'-linked polyubiquitination is required for interactions with the core autophagy factors. Ubiquitination at Lys-272 by the DCX(WDR77) complex, also named CLR4(WDR77) complex, in intestinal cells, leading to its degradation by the proteasome.

The protein localises to the golgi apparatus membrane. It localises to the cell membrane. Its subcellular location is the cytoplasmic vesicle. It is found in the phagosome membrane. The protein resides in the autophagosome membrane. The protein localises to the lysosome membrane. It localises to the late endosome membrane. Its subcellular location is the mitochondrion membrane. It is found in the cell projection. The protein resides in the phagocytic cup. The enzyme catalyses GTP + H2O = GDP + phosphate + H(+). Immunity-related GTPase that plays important roles in innate immunity and inflammatory response. Acts as a dynamin-like protein that binds to intracellular membranes and promotes remodeling and trafficking of those membranes. Required for clearance of acute protozoan and bacterial infections by interacting with autophagy and lysosome regulatory proteins, thereby promoting the fusion of phagosomes with lysosomes for efficient degradation of cargo including microbes. Regulates selective autophagy, including xenophagy and mitophagy, both directly and indirectly. Directly regulates autophagy by acting as a molecular adapter that promotes the coassembly of the core autophagy machinery to mediate antimicrobial defense: Irgm (1) activates AMPK, which in turn phosphorylates ULK1 and BECN1 to induce autophagy, (2) promotes the coassembly of ULK1 and BECN1, enhancing BECN1-interacting partners and (3) influences the composition of the BECN1 complex, by competing with the negative regulators BCL2 and RUBCN, to trigger autophagy. Also activates autophagy by promoting recruitment of STX17 to autophagosomes. In collaboration with ATG8 proteins, regulate lysosomal biogenesis, a fundamental process for any autophagic pathway, by promoting TFEB dephosphorylation. Also modulates autophagy by assisting with autophagosome formation and preventing lysosomal deacidification. Regulates autophagy by affecting mitochondrial fusion and fission. Also involved in M1 macrophage activation for the production of proinflammatory cytokines. While activating autophagy, acts as a key negative regulator of the inflammatory and interferon responses both by (1) promoting mitophagy and (2) mediating autophagy-dependent degradation of effectors of the inflammatory response. Promotes degradation of damaged and IFNG/IFN-gamma-stressed mitochondria via mitophagy, preventing cytosolic release of ligands that activate inflammation. Negatively regulates interferon-signaling in hematopoietic stem cells, preserving hematopoietic stem cell number and function. Promotes expansion of activated CD4(+) T-cells by inhibiting IFNG/IFN-gamma signaling, thereby preventing Ifng-mediated cell death of CD4(+) T-cells. Acts as a suppressor of inflammation by promoting recruitment of inflammation effectors, such as CGAS, RIGI/RIG-I and NLRP3, to autophagosome membranes, leading to their SQSTM1/p62-dependent autophagic degradation. Also directly inhibits assembly of the NLRP3 inflammasome by preventing the association between NLRP3 and PYCARD. Acts as a negative regulator of antiviral innate immune response by suppressing the RIPK2-dependent pro-inflammatory response: mediates recruitment of RIPosomes, composed of RIPK2 and NOD1 or NOD2, to autophagosome membranes, promoting their SQSTM1/p62-dependent autophagic degradation. In Rattus norvegicus (Rat), this protein is Immunity-related GTPase family M protein.